Reading from the N-terminus, the 499-residue chain is Glycerol kinase (499 aa).

Threonine 13 serves as a coordination point for ADP. The ATP site is built by threonine 13, threonine 14, and serine 15. Threonine 13 contacts sn-glycerol 3-phosphate. Arginine 17 serves as a coordination point for ADP. Sn-glycerol 3-phosphate is bound by residues arginine 83, glutamate 84, tyrosine 135, and aspartate 245. The glycerol site is built by arginine 83, glutamate 84, tyrosine 135, aspartate 245, and glutamine 246. ADP-binding residues include threonine 267 and glycine 310. Threonine 267, glycine 310, glutamine 314, and alanine 411 together coordinate ATP. Alanine 411 and asparagine 415 together coordinate ADP.

Belongs to the FGGY kinase family.

It carries out the reaction glycerol + ATP = sn-glycerol 3-phosphate + ADP + H(+). It functions in the pathway polyol metabolism; glycerol degradation via glycerol kinase pathway; sn-glycerol 3-phosphate from glycerol: step 1/1. With respect to regulation, inhibited by fructose 1,6-bisphosphate (FBP). Its function is as follows. Key enzyme in the regulation of glycerol uptake and metabolism. Catalyzes the phosphorylation of glycerol to yield sn-glycerol 3-phosphate. This chain is Glycerol kinase, found in Xylella fastidiosa (strain M23).